A 401-amino-acid polypeptide reads, in one-letter code: 8-amino-7-oxononanoate synthase (401 aa).

Substrate is bound at residue arginine 24. Residue 111–112 (GF) coordinates pyridoxal 5'-phosphate. Histidine 137 contacts substrate. Positions 183, 211, and 240 each coordinate pyridoxal 5'-phosphate. Lysine 243 carries the N6-(pyridoxal phosphate)lysine modification. Residue threonine 357 participates in substrate binding.

The protein belongs to the class-II pyridoxal-phosphate-dependent aminotransferase family. BioF subfamily. In terms of assembly, homodimer. Pyridoxal 5'-phosphate is required as a cofactor.

It catalyses the reaction 6-carboxyhexanoyl-[ACP] + L-alanine + H(+) = (8S)-8-amino-7-oxononanoate + holo-[ACP] + CO2. It functions in the pathway cofactor biosynthesis; biotin biosynthesis. Functionally, catalyzes the decarboxylative condensation of pimeloyl-[acyl-carrier protein] and L-alanine to produce 8-amino-7-oxononanoate (AON), [acyl-carrier protein], and carbon dioxide. This is 8-amino-7-oxononanoate synthase from Xylella fastidiosa (strain M12).